The primary structure comprises 519 residues: Protein nucleotidyltransferase YdiU (519 aa).

ATP-binding residues include G100, G102, R103, K123, D135, G136, R193, and R200. Catalysis depends on D270, which acts as the Proton acceptor. N271 and D280 together coordinate Mg(2+). D280 is an ATP binding site.

Belongs to the SELO family. The cofactor is Mg(2+). Requires Mn(2+) as cofactor.

It carries out the reaction L-seryl-[protein] + ATP = 3-O-(5'-adenylyl)-L-seryl-[protein] + diphosphate. The enzyme catalyses L-threonyl-[protein] + ATP = 3-O-(5'-adenylyl)-L-threonyl-[protein] + diphosphate. The catalysed reaction is L-tyrosyl-[protein] + ATP = O-(5'-adenylyl)-L-tyrosyl-[protein] + diphosphate. It catalyses the reaction L-histidyl-[protein] + UTP = N(tele)-(5'-uridylyl)-L-histidyl-[protein] + diphosphate. It carries out the reaction L-seryl-[protein] + UTP = O-(5'-uridylyl)-L-seryl-[protein] + diphosphate. The enzyme catalyses L-tyrosyl-[protein] + UTP = O-(5'-uridylyl)-L-tyrosyl-[protein] + diphosphate. Its function is as follows. Nucleotidyltransferase involved in the post-translational modification of proteins. It can catalyze the addition of adenosine monophosphate (AMP) or uridine monophosphate (UMP) to a protein, resulting in modifications known as AMPylation and UMPylation. This chain is Protein nucleotidyltransferase YdiU, found in Xylella fastidiosa (strain 9a5c).